A 178-amino-acid polypeptide reads, in one-letter code: Protein-export protein SecB (178 aa).

Residues 1–13 (MADEGDVLTDLDM) show a composition bias toward acidic residues. Positions 1-25 (MADEGDVLTDLDMDPAAGGNGADNR) are disordered.

The protein belongs to the SecB family. In terms of assembly, homotetramer, a dimer of dimers. One homotetramer interacts with 1 SecA dimer.

The protein localises to the cytoplasm. Functionally, one of the proteins required for the normal export of preproteins out of the cell cytoplasm. It is a molecular chaperone that binds to a subset of precursor proteins, maintaining them in a translocation-competent state. It also specifically binds to its receptor SecA. This chain is Protein-export protein SecB, found in Erythrobacter litoralis (strain HTCC2594).